Reading from the N-terminus, the 153-residue chain is Nuclear cap-binding protein subunit 2 (153 aa).

Residues Tyr17, Tyr40, 109–113, 120–124, and 130–131 each bind mRNA; these read RTDWD, RQYGR, and QV. Residues 37-115 enclose the RRM domain; sequence CTLYVGNLSF…RIVRTDWDAG (79 aa).

The protein belongs to the RRM NCBP2 family. In terms of assembly, component of the nuclear cap-binding complex (CBC), a heterodimer composed of ncbp1/cbp80 and ncbp2/cbp20 that interacts with m7GpppG-capped RNA.

It is found in the nucleus. The protein resides in the cytoplasm. Component of the cap-binding complex (CBC), which binds co-transcriptionally to the 5' cap of pre-mRNAs and is involved in various processes such as pre-mRNA splicing, translation regulation, nonsense-mediated mRNA decay, RNA-mediated gene silencing (RNAi) by microRNAs (miRNAs) and mRNA export. The CBC complex is involved in mRNA export from the nucleus, leading to the recruitment of the mRNA export machinery to the 5' end of mRNA and to mRNA export in a 5' to 3' direction through the nuclear pore. The CBC complex is also involved in mediating U snRNA and intronless mRNAs export from the nucleus. The CBC complex is essential for a pioneer round of mRNA translation, before steady state translation when the CBC complex is replaced by cytoplasmic cap-binding protein eIF4E. The pioneer round of mRNA translation mediated by the CBC complex plays a central role in nonsense-mediated mRNA decay (NMD), NMD only taking place in mRNAs bound to the CBC complex, but not on eIF4E-bound mRNAs. The CBC complex enhances NMD in mRNAs containing at least one exon-junction complex (EJC), promoting the interaction between upf1 and upf2. The CBC complex is also involved in 'failsafe' NMD, which is independent of the EJC complex, while it does not participate in Staufen-mediated mRNA decay (SMD). During cell proliferation, the CBC complex is also involved in microRNAs (miRNAs) biogenesis via its interaction with srrt/ars2, thereby being required for miRNA-mediated RNA interference. The CBC complex also acts as a negative regulator of parn, thereby acting as an inhibitor of mRNA deadenylation. In the CBC complex, ncbp2/cbp20 recognizes and binds capped RNAs (m7GpppG-capped RNA) but requires ncbp1/cbp80 to stabilize the movement of its N-terminal loop and lock the CBC into a high affinity cap-binding state with the cap structure. The conventional cap-binding complex with NCBP2 binds both small nuclear RNA (snRNA) and messenger (mRNA) and is involved in their export from the nucleus. The chain is Nuclear cap-binding protein subunit 2 (ncbp2) from Xenopus laevis (African clawed frog).